The sequence spans 223 residues: MADLVPVLTIDGPSGVGKGTVSKIVAARLGWHYLDSGALYRAVAVAVDWAAVDVSDTTALVKCAFDTCVNFAECADGEMRVLVNAIDATDVLRMETTGVLASTIAAISEVRAALKERQQMFRRTPGLVADGRDMGTVIFPDAQYKVFLTAKAEERAQRRYKQLMKKGVSVMLGALLEEIRARDARDVCRSVAPLKPADDALLIDSTCMEVDEVVAQVLALVTD.

12–20 (GPSGVGKGT) serves as a coordination point for ATP.

Belongs to the cytidylate kinase family. Type 1 subfamily.

Its subcellular location is the cytoplasm. It catalyses the reaction CMP + ATP = CDP + ADP. The enzyme catalyses dCMP + ATP = dCDP + ADP. This is Cytidylate kinase from Xylella fastidiosa (strain M12).